Reading from the N-terminus, the 253-residue chain is 28 kDa inner dynein arm light chain, axonemal (253 aa).

The tract at residues 19–44 is disordered; sequence TSKDKGKGAKGTPGKKGALPPVEQKP. Residues 160 to 239 are a coiled coil; it reads IRKALQTEQG…LKQQLETFLV (80 aa).

Belongs to the inner dynein arm light chain family.

It is found in the cytoplasm. It localises to the cytoskeleton. The protein resides in the flagellum axoneme. In terms of biological role, plays a dynamic role in flagellar motility. May be necessary for stable assembly of a subset of inner dynein arms or for the binding of these arms to the outer doublet microtubules of the axoneme. This Chlamydomonas reinhardtii (Chlamydomonas smithii) protein is 28 kDa inner dynein arm light chain, axonemal (IDA4).